Consider the following 945-residue polypeptide: MDKILIRGARTHNLKNVDLTLPRDKLIVITGLSGSGKSSLAFDTLYAEGQRRYVESLSAYARQFLSMMEKPDVDTIEGLSPAISIEQKSTSHNPRSTVGTITEIYDYLRLLYARVGTPRCPDHDIPLEAQTVSQMVDQVLALPEGSKLMLLAPVIRERKGEHLAVFDEMRAQGFVRARVDGKLYELDEVPKLDKQKKHSIDVVVDRFKVRADLQQRLAESFETALSLADGIALVAPMDEDEDVEEIIFSARFACPVCGHSISELEPKLFSFNNPAGACPTCDGLGVKQFFDARRVVNGELTLAEGAIRGWDRRNVYYFQMLGSLAQHYGFSLEEPFDELGAEHQKVVLYGSGRENVDFRYLNDRGDIVKRSHPFEGILPNLERRYRETESATVREELAKFLSTQPCPDCHGTRLRREARHVWVGDRTLPAITAMPVGEACEYAAGLSLTGRRGEIAAKILKEIRDRLQFLVNVGLDYLTLDRSADTLSGGEAQRIRLASQIGAGLVGVMYILDEPSIGLHQRDNERLLGTLTHLRNLGNTVIVVEHDEDAIRLADYVVDIGPGAGVHGGQVVAEGTPDQVMNHPDSLTGKYLSGRKKIAVPAKRTPRDKKKLLKLKGARGNNLQNVNLEIPVGLFTCITGVSGSGKSTLINNTLFPITATALNGATTLEVAPYDSFDGLQHLDKVVDIDQSPIGRTPRSNPATYTGLFTPIRELFSGVPEARSRGYGPGRFSFNVKGGRCEACQGDGVIKVEMHFLPDIYVPCDVCKGKRYNRETLEIRYKGKSIHEVLEMTIEEAREFFDAVPALARKLQTLMDVGLSYIKLGQSATTLSGGEAQRVKLSRELSKRDTGKTLYILDEPTTGLHFADIQQLLDVLHRLRDHGNTVVVIEHNLDVIKTADWLVDLGPEGGSKGGQIIANGTPEQVAEMPQSHTGHFLKPLLERDRA.

Residue 31-38 (GLSGSGKS) coordinates ATP. Residues 254–281 (CPVCGHSISELEPKLFSFNNPAGACPTC) form a C4-type zinc finger. ABC transporter domains are found at residues 310–587 (WDRR…PDSL) and 607–937 (RDKK…HFLK). An ATP-binding site is contributed by 640 to 647 (GVSGSGKS). Residues 740 to 766 (CEACQGDGVIKVEMHFLPDIYVPCDVC) form a C4-type zinc finger.

Belongs to the ABC transporter superfamily. UvrA family. As to quaternary structure, forms a heterotetramer with UvrB during the search for lesions.

Its subcellular location is the cytoplasm. Functionally, the UvrABC repair system catalyzes the recognition and processing of DNA lesions. UvrA is an ATPase and a DNA-binding protein. A damage recognition complex composed of 2 UvrA and 2 UvrB subunits scans DNA for abnormalities. When the presence of a lesion has been verified by UvrB, the UvrA molecules dissociate. This chain is UvrABC system protein A, found in Pseudomonas aeruginosa (strain ATCC 15692 / DSM 22644 / CIP 104116 / JCM 14847 / LMG 12228 / 1C / PRS 101 / PAO1).